Consider the following 130-residue polypeptide: Small ribosomal subunit protein uS9 (130 aa).

The tract at residues 107–130 is disordered; the sequence is DARMKERKKPGLKKARKASQFSKR. A compositionally biased stretch (basic residues) spans 111–130; that stretch reads KERKKPGLKKARKASQFSKR.

This sequence belongs to the universal ribosomal protein uS9 family.

The protein is Small ribosomal subunit protein uS9 of Ligilactobacillus salivarius (strain UCC118) (Lactobacillus salivarius).